The chain runs to 165 residues: Neurotrophin-3 (165 aa).

The signal sequence occupies residues 1-3 (IQS). A propeptide spanning residues 4–119 (TSMDQGSLSE…VLNRTSRRKR (116 aa)) is cleaved from the precursor. Asn112 carries N-linked (GlcNAc...) asparagine glycosylation.

This sequence belongs to the NGF-beta family.

It localises to the secreted. Functionally, seems to promote the survival of visceral and proprioceptive sensory neurons. This is Neurotrophin-3 (NTF3) from Anilius scytale (Coral cylinder snake).